A 293-amino-acid polypeptide reads, in one-letter code: Putative metal ABC transporter substrate-binding protein Hpf (293 aa).

Positions 1 to 22 are cleaved as a signal peptide; the sequence is MRNSFKIMTALALGLFAMQANA. Residues 23–48 form an interaction with host components region; sequence KFKVVTTFTVIQDIAQNVAGNAATVE. Positions 58, 123, 189, and 264 each coordinate a divalent metal cation.

Belongs to the bacterial solute-binding protein 9 family. As to quaternary structure, interacts with host laminin and vitronectin. Can interact with both immobilized and soluble vitronectin.

It is found in the cell outer membrane. It localises to the cell surface. The protein resides in the periplasm. Functionally, part of an ATP-binding cassette (ABC) transport system involved in metal import. Binds a metal with high affinity and specificity and delivers it to the membrane permease for translocation into the cytoplasm. Acts as an adhesin that promotes binding of H.influenzae to host laminin and vitronectin. In addition, interaction with serum vitronectin plays an important role in bacterial serum resistance. In Haemophilus influenzae (strain NTHi 3655), this protein is Putative metal ABC transporter substrate-binding protein Hpf (hpf).